A 244-amino-acid chain; its full sequence is tRNA pseudouridine synthase A (244 aa).

Asp52 serves as the catalytic Nucleophile. Tyr110 provides a ligand contact to substrate.

This sequence belongs to the tRNA pseudouridine synthase TruA family. As to quaternary structure, homodimer.

It carries out the reaction uridine(38/39/40) in tRNA = pseudouridine(38/39/40) in tRNA. In terms of biological role, formation of pseudouridine at positions 38, 39 and 40 in the anticodon stem and loop of transfer RNAs. The chain is tRNA pseudouridine synthase A from Clostridium kluyveri (strain ATCC 8527 / DSM 555 / NBRC 12016 / NCIMB 10680 / K1).